The primary structure comprises 796 residues: Striatin-3 (796 aa).

Methionine 1 is subject to N-acetylmethionine. A compositionally biased stretch (gly residues) spans 1 to 13; it reads MDELAGGGGGGQG. The tract at residues 1 to 60 is disordered; it reads MDELAGGGGGGQGMAAPPRPQQGPGGNLSLPPGANGAPGGGGPPAAEAAGPPAGPELSRP. The interval 71–79 is caveolin-binding; it reads YIQHEWARF. Positions 77 to 136 form a coiled coil; it reads ARFEMERAHWEVERAELQARIAFLQGERKGQENLKKDLVRRIKMLEYALKQERAKYHKLK. Threonine 150 carries the phosphothreonine modification. Residues 166 to 183 are calmodulin-binding; that stretch reads QNSQLTWKQGRQLLRQYL. Serine 202, serine 214, serine 229, serine 257, and serine 334 each carry phosphoserine. Disordered regions lie at residues 252 to 271 and 311 to 335; these read ENAD…IPEG and EDGE…DLSP. Residues 253-264 are compositionally biased toward acidic residues; that stretch reads NADDSDEEENDM. WD repeat units follow at residues 477–516, 530–569, 583–622, 678–717, 720–759, and 766–795; these read SHFD…PAKK, AHIG…VDPY, AHTD…PCVC, QSSN…MIHS, AHLD…CVQE, and KLDE…AKVF.

This sequence belongs to the WD repeat striatin family. In terms of assembly, tetramerizes. Part of the core of STRIPAK complexes composed of PP2A catalytic and scaffolding subunits, the striatins (PP2A regulatory subunits), the striatin-associated proteins MOB4, STRIP1 and STRIP2, PDCD10 and members of the STE20 kinases, such as STK24 and STK26. The STRIPAK complex can be extended by adapter proteins such as SLMAP:SIKE1 or CTTNBP2NL. Interacts with CDC42BPB. Mainly expressed in the brain and muscles but is also detected at low levels in various tissues such as kidney, spleen and lung.

The protein resides in the cytoplasm. It is found in the membrane. Its function is as follows. Calmodulin-binding scaffolding protein which is the center of the striatin-interacting phosphatase and kinase (STRIPAK) complexes. STRIPAK complexes have critical roles in protein (de)phosphorylation and are regulators of multiple signaling pathways including Hippo, MAPK, nuclear receptor and cytoskeleton remodeling. Different types of STRIPAK complexes are involved in a variety of biological processes such as cell growth, differentiation, apoptosis, metabolism and immune regulation. This chain is Striatin-3 (Strn3), found in Mus musculus (Mouse).